The following is a 95-amino-acid chain: MTKISSSDVRKVAQLARLELPEDQIETYTEQLEEILSYVDQLQEIDTKNIPPTTRAVEVVNAMRDDLVEVNCSREDLLNQAPHREGDFFRVPKIL.

Belongs to the GatC family. Heterotrimer of A, B and C subunits.

The enzyme catalyses L-glutamyl-tRNA(Gln) + L-glutamine + ATP + H2O = L-glutaminyl-tRNA(Gln) + L-glutamate + ADP + phosphate + H(+). It catalyses the reaction L-aspartyl-tRNA(Asn) + L-glutamine + ATP + H2O = L-asparaginyl-tRNA(Asn) + L-glutamate + ADP + phosphate + 2 H(+). In terms of biological role, allows the formation of correctly charged Asn-tRNA(Asn) or Gln-tRNA(Gln) through the transamidation of misacylated Asp-tRNA(Asn) or Glu-tRNA(Gln) in organisms which lack either or both of asparaginyl-tRNA or glutaminyl-tRNA synthetases. The reaction takes place in the presence of glutamine and ATP through an activated phospho-Asp-tRNA(Asn) or phospho-Glu-tRNA(Gln). The protein is Aspartyl/glutamyl-tRNA(Asn/Gln) amidotransferase subunit C of Prochlorococcus marinus (strain NATL2A).